A 233-amino-acid chain; its full sequence is Probable transglycosylase IsaA (233 aa).

The N-terminal stretch at 1–29 (MKKTIMASSLAVALGVTGYAAGTGHQAHA) is a signal peptide.

The protein belongs to the transglycosylase family. IsaA subfamily.

It localises to the secreted. In terms of biological role, is able to cleave peptidoglycan. The protein is Probable transglycosylase IsaA (isaA) of Staphylococcus aureus (strain Mu3 / ATCC 700698).